A 147-amino-acid chain; its full sequence is Protein archease (147 aa).

D17, D146, and V147 together coordinate Ca(2+).

Belongs to the archease family.

In terms of biological role, activates the tRNA-splicing ligase complex by facilitating the enzymatic turnover of catalytic subunit RtcB. Acts by promoting the guanylylation of RtcB, a key intermediate step in tRNA ligation. Can also alter the NTP specificity of RtcB such that ATP, dGTP or ITP is used efficiently. In Pyrobaculum islandicum (strain DSM 4184 / JCM 9189 / GEO3), this protein is Protein archease.